A 302-amino-acid polypeptide reads, in one-letter code: Pseudouridine-5'-phosphate glycosidase (302 aa).

Glutamate 25 functions as the Proton donor in the catalytic mechanism. Substrate contacts are provided by lysine 86 and valine 106. A Mn(2+)-binding site is contributed by aspartate 138. 140-142 (SAD) contacts substrate. The active-site Nucleophile is lysine 159.

This sequence belongs to the pseudouridine-5'-phosphate glycosidase family. In terms of assembly, homotrimer. Mn(2+) serves as cofactor.

It carries out the reaction D-ribose 5-phosphate + uracil = psi-UMP + H2O. Functionally, catalyzes the reversible cleavage of pseudouridine 5'-phosphate (PsiMP) to ribose 5-phosphate and uracil. Functions biologically in the cleavage direction, as part of a pseudouridine degradation pathway. The sequence is that of Pseudouridine-5'-phosphate glycosidase from Glaesserella parasuis serovar 5 (strain SH0165) (Haemophilus parasuis).